The following is a 95-amino-acid chain: PIK3R3 upstream open reading frame protein (95 aa).

The tract at residues 1-27 is disordered; it reads MGPSRLVRGPRPQGMRSPYRRPGMGWP.

This Homo sapiens (Human) protein is PIK3R3 upstream open reading frame protein.